The following is a 379-amino-acid chain: UDP-4-amino-4-deoxy-L-arabinose--oxoglutarate aminotransferase (379 aa).

Lysine 182 is subject to N6-(pyridoxal phosphate)lysine.

The protein belongs to the DegT/DnrJ/EryC1 family. ArnB subfamily. As to quaternary structure, homodimer. The cofactor is pyridoxal 5'-phosphate.

It catalyses the reaction UDP-4-amino-4-deoxy-beta-L-arabinose + 2-oxoglutarate = UDP-beta-L-threo-pentopyranos-4-ulose + L-glutamate. Its pathway is nucleotide-sugar biosynthesis; UDP-4-deoxy-4-formamido-beta-L-arabinose biosynthesis; UDP-4-deoxy-4-formamido-beta-L-arabinose from UDP-alpha-D-glucuronate: step 2/3. It participates in bacterial outer membrane biogenesis; lipopolysaccharide biosynthesis. In terms of biological role, catalyzes the conversion of UDP-4-keto-arabinose (UDP-Ara4O) to UDP-4-amino-4-deoxy-L-arabinose (UDP-L-Ara4N). The modified arabinose is attached to lipid A and is required for resistance to polymyxin and cationic antimicrobial peptides. The sequence is that of UDP-4-amino-4-deoxy-L-arabinose--oxoglutarate aminotransferase from Escherichia coli O157:H7.